Here is a 391-residue protein sequence, read N- to C-terminus: Formate-dependent phosphoribosylglycinamide formyltransferase (391 aa).

N(1)-(5-phospho-beta-D-ribosyl)glycinamide is bound by residues Glu-18–Leu-19 and Glu-78. Residues Arg-110, Lys-151, Ser-156 to Gln-161, Glu-191 to Ile-194, and Glu-199 each bind ATP. The ATP-grasp domain occupies Asp-115–Leu-305. Residues Glu-264 and Glu-276 each contribute to the Mg(2+) site. N(1)-(5-phospho-beta-D-ribosyl)glycinamide-binding positions include Asp-283, Lys-353, and Arg-360 to Arg-361.

This sequence belongs to the PurK/PurT family. As to quaternary structure, homodimer.

The enzyme catalyses N(1)-(5-phospho-beta-D-ribosyl)glycinamide + formate + ATP = N(2)-formyl-N(1)-(5-phospho-beta-D-ribosyl)glycinamide + ADP + phosphate + H(+). Its pathway is purine metabolism; IMP biosynthesis via de novo pathway; N(2)-formyl-N(1)-(5-phospho-D-ribosyl)glycinamide from N(1)-(5-phospho-D-ribosyl)glycinamide (formate route): step 1/1. Involved in the de novo purine biosynthesis. Catalyzes the transfer of formate to 5-phospho-ribosyl-glycinamide (GAR), producing 5-phospho-ribosyl-N-formylglycinamide (FGAR). Formate is provided by PurU via hydrolysis of 10-formyl-tetrahydrofolate. This chain is Formate-dependent phosphoribosylglycinamide formyltransferase, found in Synechococcus elongatus (strain ATCC 33912 / PCC 7942 / FACHB-805) (Anacystis nidulans R2).